We begin with the raw amino-acid sequence, 157 residues long: 2-amino-4-hydroxy-6-hydroxymethyldihydropteridine pyrophosphokinase (157 aa).

It belongs to the HPPK family.

It catalyses the reaction 6-hydroxymethyl-7,8-dihydropterin + ATP = (7,8-dihydropterin-6-yl)methyl diphosphate + AMP + H(+). Its pathway is cofactor biosynthesis; tetrahydrofolate biosynthesis; 2-amino-4-hydroxy-6-hydroxymethyl-7,8-dihydropteridine diphosphate from 7,8-dihydroneopterin triphosphate: step 4/4. Its function is as follows. Catalyzes the transfer of pyrophosphate from adenosine triphosphate (ATP) to 6-hydroxymethyl-7,8-dihydropterin, an enzymatic step in folate biosynthesis pathway. The chain is 2-amino-4-hydroxy-6-hydroxymethyldihydropteridine pyrophosphokinase (folK) from Campylobacter jejuni subsp. jejuni serotype O:2 (strain ATCC 700819 / NCTC 11168).